Consider the following 507-residue polypeptide: ATP synthase subunit alpha, chloroplastic (507 aa).

Position 170–177 (170–177 (GDRQTGKT)) interacts with ATP. Disordered stretches follow at residues 278–325 (PRRP…TQAG), 392–430 (EPEASAQFASDPDKATRNQSARGQRSRELLKQSQPAPLP), and 452–471 (GQVQGSPAQSREYLVTNKPE). Positions 282–303 (PGREAHPGDVPHLHPRPPERAA) are enriched in basic and acidic residues. The segment covering 305 to 322 (LSSQPGEGSTTASPTVET) has biased composition (polar residues).

This sequence belongs to the ATPase alpha/beta chains family. As to quaternary structure, F-type ATPases have 2 components, CF(1) - the catalytic core - and CF(0) - the membrane proton channel. CF(1) has five subunits: alpha(3), beta(3), gamma(1), delta(1), epsilon(1). CF(0) has four main subunits: a, b, b' and c.

The protein resides in the plastid. It localises to the chloroplast thylakoid membrane. It carries out the reaction ATP + H2O + 4 H(+)(in) = ADP + phosphate + 5 H(+)(out). Its function is as follows. Produces ATP from ADP in the presence of a proton gradient across the membrane. The alpha chain is a regulatory subunit. This chain is ATP synthase subunit alpha, chloroplastic, found in Selaginella uncinata (Blue spike-moss).